Reading from the N-terminus, the 546-residue chain is Metal transporter Nramp6.2 (546 aa).

Transmembrane regions (helical) follow at residues 50 to 70 (FLPY…PGNL), 83 to 103 (ELLW…SLAA), 128 to 150 (SLWL…GTAF), 154 to 176 (ILFH…LLLG), 187 to 207 (LLIS…LSYV), 233 to 253 (IALL…ALVL), 270 to 290 (YFLI…VSII), and 333 to 353 (IYAI…TYAG). Asn371 is a glycosylation site (N-linked (GlcNAc...) asparagine). A run of 4 helical transmembrane segments spans residues 374–394 (TRCI…SSGA), 397–417 (LIII…IPLL), 433–453 (IYII…NVYY), and 473–493 (VIIG…IIYL).

Belongs to the NRAMP (TC 2.A.55) family.

The protein resides in the membrane. In terms of biological role, probable divalent metal transporter. This is Metal transporter Nramp6.2 from Populus trichocarpa (Western balsam poplar).